Here is a 69-residue protein sequence, read N- to C-terminus: Large ribosomal subunit protein bL31 (69 aa).

Residues C16, C18, C36, and C39 each coordinate Zn(2+).

It belongs to the bacterial ribosomal protein bL31 family. Type A subfamily. In terms of assembly, part of the 50S ribosomal subunit. The cofactor is Zn(2+).

Functionally, binds the 23S rRNA. The chain is Large ribosomal subunit protein bL31 from Kosmotoga olearia (strain ATCC BAA-1733 / DSM 21960 / TBF 19.5.1).